The following is a 284-amino-acid chain: NAD kinase (284 aa).

D71 serves as the catalytic Proton acceptor. NAD(+) is bound by residues 71–72 (DG), 144–145 (ND), D174, 185–190 (TAYNLS), and Q242.

It belongs to the NAD kinase family. A divalent metal cation is required as a cofactor.

It is found in the cytoplasm. The catalysed reaction is NAD(+) + ATP = ADP + NADP(+) + H(+). Its function is as follows. Involved in the regulation of the intracellular balance of NAD and NADP, and is a key enzyme in the biosynthesis of NADP. Catalyzes specifically the phosphorylation on 2'-hydroxyl of the adenosine moiety of NAD to yield NADP. The chain is NAD kinase from Sulfurimonas denitrificans (strain ATCC 33889 / DSM 1251) (Thiomicrospira denitrificans (strain ATCC 33889 / DSM 1251)).